The following is a 206-amino-acid chain: Thymidylate kinase (206 aa).

11–18 lines the ATP pocket; the sequence is GIDGAGKT.

The protein belongs to the thymidylate kinase family.

The catalysed reaction is dTMP + ATP = dTDP + ADP. Phosphorylation of dTMP to form dTDP in both de novo and salvage pathways of dTTP synthesis. This chain is Thymidylate kinase, found in Burkholderia pseudomallei (strain 1106a).